The chain runs to 391 residues: Phosphoglycerate kinase (391 aa).

Substrate contacts are provided by residues 21 to 23 (DLN), Arg36, 59 to 62 (HLGR), Arg113, and Arg146. ATP contacts are provided by residues Lys197, Glu319, and 345–348 (GGDT).

This sequence belongs to the phosphoglycerate kinase family. As to quaternary structure, monomer.

It is found in the cytoplasm. The enzyme catalyses (2R)-3-phosphoglycerate + ATP = (2R)-3-phospho-glyceroyl phosphate + ADP. It functions in the pathway carbohydrate degradation; glycolysis; pyruvate from D-glyceraldehyde 3-phosphate: step 2/5. The protein is Phosphoglycerate kinase of Shewanella baltica (strain OS195).